A 563-amino-acid chain; its full sequence is Eukaryotic translation initiation factor 3 subunit D-1 (563 aa).

The interval 98 to 167 (VQKPPHQRGR…GPPPKMRESS (70 aa)) is disordered. Over residues 100–121 (KPPHQRGRFRNMRNSRSGRGRN) the composition is skewed to basic residues. Residue threonine 128 is modified to Phosphothreonine. Residues 291-305 (EFDLLTVNETSVEPP) are RNA gate.

Belongs to the eIF-3 subunit D family. Component of the eukaryotic translation initiation factor 3 (eIF-3) complex. The eIF-3 complex interacts with pix.

Its subcellular location is the cytoplasm. Functionally, mRNA cap-binding component of the eukaryotic translation initiation factor 3 (eIF-3) complex, which is involved in protein synthesis of a specialized repertoire of mRNAs and, together with other initiation factors, stimulates binding of mRNA and methionyl-tRNAi to the 40S ribosome. The eIF-3 complex specifically targets and initiates translation of a subset of mRNAs involved in cell proliferation. In the eIF-3 complex, eif3d specifically recognizes and binds the 7-methylguanosine cap of a subset of mRNAs. The polypeptide is Eukaryotic translation initiation factor 3 subunit D-1 (Drosophila mojavensis (Fruit fly)).